The primary structure comprises 297 residues: Virulence genes transcriptional activator SpvR (297 aa).

The 61-residue stretch at 1-61 folds into the HTH lysR-type domain; the sequence is MDFLINKKLK…IRKNGTLIPT (61 aa). Residues 21–40 constitute a DNA-binding region (H-T-H motif); the sequence is FSIATSVLYITRTPLSRVIS.

Belongs to the LysR transcriptional regulatory family.

It is found in the cytoplasm. Its function is as follows. Positive regulator for the plasmid-encoded virulence factors SpvA, SpvB, and SpvC. The protein is Virulence genes transcriptional activator SpvR (spvR) of Salmonella dublin.